The following is a 253-amino-acid chain: Ubiquinone/menaquinone biosynthesis C-methyltransferase UbiE (253 aa).

S-adenosyl-L-methionine contacts are provided by residues Thr76, Asp97, 125 to 126 (NA), and Ser142.

The protein belongs to the class I-like SAM-binding methyltransferase superfamily. MenG/UbiE family.

The catalysed reaction is a 2-demethylmenaquinol + S-adenosyl-L-methionine = a menaquinol + S-adenosyl-L-homocysteine + H(+). It catalyses the reaction a 2-methoxy-6-(all-trans-polyprenyl)benzene-1,4-diol + S-adenosyl-L-methionine = a 5-methoxy-2-methyl-3-(all-trans-polyprenyl)benzene-1,4-diol + S-adenosyl-L-homocysteine + H(+). It participates in quinol/quinone metabolism; menaquinone biosynthesis; menaquinol from 1,4-dihydroxy-2-naphthoate: step 2/2. It functions in the pathway cofactor biosynthesis; ubiquinone biosynthesis. Its function is as follows. Methyltransferase required for the conversion of demethylmenaquinol (DMKH2) to menaquinol (MKH2) and the conversion of 2-polyprenyl-6-methoxy-1,4-benzoquinol (DDMQH2) to 2-polyprenyl-3-methyl-6-methoxy-1,4-benzoquinol (DMQH2). The polypeptide is Ubiquinone/menaquinone biosynthesis C-methyltransferase UbiE (Xanthomonas oryzae pv. oryzae (strain MAFF 311018)).